The sequence spans 869 residues: DNA mismatch repair protein MutS (869 aa).

ATP is bound at residue 619-626 (GPNMAGKS).

Belongs to the DNA mismatch repair MutS family.

In terms of biological role, this protein is involved in the repair of mismatches in DNA. It is possible that it carries out the mismatch recognition step. This protein has a weak ATPase activity. This is DNA mismatch repair protein MutS from Caldanaerobacter subterraneus subsp. tengcongensis (strain DSM 15242 / JCM 11007 / NBRC 100824 / MB4) (Thermoanaerobacter tengcongensis).